A 67-amino-acid chain; its full sequence is Beta-defensin 123 (67 aa).

A signal peptide spans M1 to G20. Disulfide bonds link C25–C52, C32–C46, and C36–C53.

Belongs to the beta-defensin family.

Its subcellular location is the secreted. Functionally, has antibacterial activity. The chain is Beta-defensin 123 (DEFB123) from Pongo pygmaeus (Bornean orangutan).